The following is a 101-amino-acid chain: Protein S100-A3 (101 aa).

EF-hand domains are found at residues 12–47 (IVCT…TWTP) and 50–85 (FREC…LCLY). Residue Lys26 coordinates Ca(2+). Cysteines 30 and 68 form a disulfide. Position 51 is a citrulline; by PAD3 (Arg51). Asp63, Asn65, Asp67, Glu69, and Glu74 together coordinate Ca(2+). Residues Cys83, Cys86, His87, and Cys93 each contribute to the Zn(2+) site.

It belongs to the S-100 family. As to quaternary structure, homodimer and homotetramer for the citrullinated form. Post-translationally, more than half of the arginine residues undergo citrullination by PAD1 and PAD2. Arg-51 is specifically citrullinated by PAD3 and promotes tetramerization. Skin specific, specifically expressed in cuticle of pelage follicle.

It is found in the cytoplasm. In terms of biological role, binds both calcium and zinc. May be involved in calcium-dependent cuticle cell differentiation, hair shaft and hair cuticular barrier formation. The chain is Protein S100-A3 (S100a3) from Mus musculus (Mouse).